A 339-amino-acid polypeptide reads, in one-letter code: Tetracenomycin polyketide synthesis 8-O-methyl transferase TcmO (339 aa).

Residues aspartate 200 and 226-228 (GDF) contribute to the S-adenosyl-L-methionine site. Catalysis depends on histidine 246, which acts as the Proton acceptor.

This sequence belongs to the class I-like SAM-binding methyltransferase superfamily. Cation-independent O-methyltransferase family.

It participates in antibiotic biosynthesis; tetracenomycin C biosynthesis. This chain is Tetracenomycin polyketide synthesis 8-O-methyl transferase TcmO (tcmO), found in Streptomyces glaucescens.